The chain runs to 1741 residues: MALSPNVIAALQIMYTGRGVSASDLNWWATDGANITYAEAVALFASSPDAAIKYPFFQAPQTADKRQYVAQVFANLYNIDINDTSLVPTEELDYWINWLSLSPDNYLDFPNALNNASAAAGLTDRLEALTNKADVSLSYTEALSTAGVNTFTEAQYAEAAGIIATVDDTNASVLAAEAQIVEIAASLSVFTIAQAQATPNLPPAYTISDTADNLIAGADDPVVTGANNVIANQSPAAPLSVEDANILLATADELAAGVTWDILDTAADVLAGGAAVSGAASVGITDIVDVATASQLLALGNFDGVYAIADTSANIVADPGVSGGATAITLSDPDVPVSVASATFLQGLGIPVGPSYIVEDTSANILAALSTPAIVNAAEVIVNNTDVPLSVAQAEDLLSLPNLNAGFTYIIADTLDNLSAAPSTLLDGAVSYSLTNTNPDLGVITEAEAVIVNGATNASDFNFLVADVILTPQADIRSGNSFLSVAVVEGGSIFNTLNSNDRLTGTGEDPTLSLTWQEATFGNINTIFPVLDGIETLVATLIENDLTLVSNDFDVVGQGFITGLKNVAASGTKGGDLELINLQTALETVSVTNYFFGDDVSFSIADPELAGDNDLLLLTVDQVTEDGPDVTSIKISDFSGNGGYETLGLTSGVTTSSKGNTNTVDIEGIVAVESIGITGIENLTLSTSLIGSVVKVDATGSALIPEFEGREVFTGDLKAFFDDRPGGDITFLSGSGNDEISIARDAFTLSEDLKDVISKGHILDGGAGNDELTITGDAFSDTDAGHTVIGGEGNDSILLTGVAEGPIAGHVVNSFDLINEVGGAGDDDINISGDAIGDSAGHVVFGGAGEDDIFIGFDKTLAVSGNGAALGVDLAGHVVFAGDDDDTVRITGDSFTSDSANGSGHSVEGGTGDDLIEISGDALTADPDSETIANPFFDDSEPSDLDLFIAADQPIPTTEEQYQVLLAQLGLPADYNPRNFIRGVAAISGAHTVRGGEGNDVILFGPIAGEPGNGDGQHLAFGDEGDDFIEMTGIGSVEFNGGAGDDTLVGGDGDPILGFGNDILNGDEGNDFLFGGKGNDNLQGGEGDDIMSGGEGDDFFFVDAGFDVIEDLGDANSETGDQFQVSEDAEAEIRVVQDWEATGLTFNLGIATLTIENPGGGSVDLSASNVPPNTNGYTVIGNIGDDEIIGSRDDDSIFGGRGEDSIAGLGGDDIIEGNDDDDFISGDSLLLPLLPLEEILPFGNDDIDAGSGNDVIAGDLLVVTGDDIDLNLFNGGKDTIEAGLGSDITVGDWSIGAFGDIDLNASLERTAIGGDDTITTKQGDNGIVFPIGQVAIDNFLVGDLAAAVDGVGNDIFLTETLTVIGGDDTMTGADGLDVIVGDVGLFGFEFNDSEINLTNFKLGQVNGSTVSAGDDSITGEGGNDILVGDLFVGVINNNGIIIDGGKGFQLGKDGTTSFIGGDDSISGGDGNDFLAGDFVLVDQLSAPFDPLDPNDWTFVNPYATLQGQAGDSKAQAAQAAINLAQLRLEFRAVGGDDELVGGRGNDTFYGGLGADTIDIGNDVTVGGVGVNGANEIWYMNGAFENAAVNGANVDNITGFNVNNDKFVFAAGANNFLSGDATSGLAVQRVLNLQAGNTVFNLNDPILNASANNINDVFLAVNADNSVGASLSFSLLPGLPSLVEMQQINVSSGALAGREFLFINNGVAAVSSQDDFLVELTGISGTFGLDLTPNFEVREFYA.

The span at 894-904 (SFTSDSANGSG) shows a compositional bias: polar residues. The disordered stretch occupies residues 894-913 (SFTSDSANGSGHSVEGGTGD).

Post-translationally, glycosylated.

The protein localises to the secreted. It is found in the cell wall. The protein resides in the S-layer. Functionally, S-layer protein. The S-layer is a paracrystalline mono-layered assembly of proteins which coats the surface of bacteria. Under laboratory conditions, has a supportive but not a critical role in the function of the cyanobacterium. Shows no apparent hemolytic activity against sheep erythrocytes, however, a slight hemolytic activity is detected during the conformational change caused by the rebinding of Ca(2+). The polypeptide is S-layer protein (Synechocystis sp. (strain ATCC 27184 / PCC 6803 / Kazusa)).